Here is a 1203-residue protein sequence, read N- to C-terminus: Nitric oxide synthase 3 (1203 aa).

Positions 1-71 (MGNLKSVAQE…PPEGPKFPRV (71 aa)) are disordered. Glycine 2 carries N-myristoyl glycine lipidation. S-palmitoyl cysteine attachment occurs at residues cysteine 15 and cysteine 26. Gly residues predominate over residues 15-27 (CGLGLGLGLGLCG). The residue at position 33 (threonine 33) is a Phosphothreonine. Residues 33 to 66 (TPAPEPSRAPASLLPPAPEHSPPSSPLTQPPEGP) show a composition bias toward pro residues. Zn(2+) is bound by residues cysteine 94 and cysteine 99. The segment at 98 to 486 (RCLGSLVFPR…PDPWKGSAAK (389 aa)) is interaction with NOSIP. Residue serine 102 participates in (6R)-L-erythro-5,6,7,8-tetrahydrobiopterin binding. Position 114 is a phosphoserine; by CDK5 (serine 114). Heme b is bound at residue cysteine 184. Residues glutamine 247, tryptophan 356, tyrosine 357, and glutamate 361 each coordinate L-arginine. Arginine 365 contacts (6R)-L-erythro-5,6,7,8-tetrahydrobiopterin. Residue asparagine 366 coordinates L-arginine. Positions 446, 447, and 460 each coordinate (6R)-L-erythro-5,6,7,8-tetrahydrobiopterin. Tyrosine 475 contributes to the heme b binding site. The interval 491-510 (TRKKTFKEVANAVKISASLM) is calmodulin-binding. The residue at position 495 (threonine 495) is a Phosphothreonine; by AMPK. Residues 520 to 703 (ATILYGSETG…AFRGWAQAAF (184 aa)) enclose the Flavodoxin-like domain. FMN-binding residues include serine 526, glutamate 527, threonine 528, arginine 530, serine 572, and threonine 573. Phosphoserine occurs at positions 615, 633, and 638. FMN is bound by residues serine 654, cysteine 661, glutamate 687, and glutamine 691. The FAD-binding FR-type domain maps to 756-1002 (RKMFQATIRS…IRGAPSFRLP (247 aa)). Arginine 776 is a binding site for NADP(+). Residue histidine 798 participates in FAD binding. Position 836 is a phosphoserine (serine 836). FAD is bound by residues arginine 938, tyrosine 940, serine 941, threonine 956, alanine 958, tyrosine 962, valine 975, cysteine 976, and serine 977. Threonine 1016, arginine 1049, serine 1078, arginine 1079, lysine 1085, tyrosine 1087, and glutamine 1089 together coordinate NADP(+). Phosphothreonine is present on threonine 1175. Serine 1177 carries the post-translational modification Phosphoserine; by AMPK. The residue at position 1179 (serine 1179) is a Phosphoserine.

This sequence belongs to the NOS family. In terms of assembly, homodimer. Interacts with NOSIP and NOSTRIN. Interacts with HSP90AB1. Forms a complex with ASL, ASS1 and SLC7A1; the complex regulates cell-autonomous L-arginine synthesis and citrulline recycling while channeling extracellular L-arginine to nitric oxide synthesis pathway. It depends on heme b as a cofactor. FAD serves as cofactor. FMN is required as a cofactor. Requires (6R)-L-erythro-5,6,7,8-tetrahydrobiopterin as cofactor. Phosphorylation by AMPK at Ser-1177 in the presence of Ca(2+)-calmodulin (CaM) activates activity. In absence of Ca(2+)-calmodulin, AMPK also phosphorylates Thr-495, resulting in inhibition of activity. Phosphorylation of Ser-114 by CDK5 reduces activity. In terms of tissue distribution, platelets, placenta, liver and kidney.

The protein resides in the cell membrane. It is found in the membrane. The protein localises to the caveola. It localises to the cytoplasm. Its subcellular location is the cytoskeleton. The protein resides in the golgi apparatus. It catalyses the reaction 2 L-arginine + 3 NADPH + 4 O2 + H(+) = 2 L-citrulline + 2 nitric oxide + 3 NADP(+) + 4 H2O. With respect to regulation, stimulated by calcium/calmodulin. Inhibited by NOSIP and NOSTRIN. Functionally, produces nitric oxide (NO) which is implicated in vascular smooth muscle relaxation through a cGMP-mediated signal transduction pathway. NO mediates vascular endothelial growth factor (VEGF)-induced angiogenesis in coronary vessels and promotes blood clotting through the activation of platelets. Its function is as follows. Lacks eNOS activity, dominant-negative form that may down-regulate eNOS activity by forming heterodimers with isoform 1. The sequence is that of Nitric oxide synthase 3 from Homo sapiens (Human).